Here is a 332-residue protein sequence, read N- to C-terminus: Probable allantoicase (332 aa).

This sequence belongs to the allantoicase family.

The catalysed reaction is allantoate + H2O = (S)-ureidoglycolate + urea. The protein operates within nitrogen metabolism; (S)-allantoin degradation; (S)-ureidoglycolate from allantoate (aminidohydrolase route): step 1/1. The sequence is that of Probable allantoicase from Pseudomonas aeruginosa (strain UCBPP-PA14).